The primary structure comprises 475 residues: Argininosuccinate lyase 1 (475 aa).

This sequence belongs to the lyase 1 family. Argininosuccinate lyase subfamily.

The protein resides in the cytoplasm. It catalyses the reaction 2-(N(omega)-L-arginino)succinate = fumarate + L-arginine. It participates in amino-acid biosynthesis; L-arginine biosynthesis; L-arginine from L-ornithine and carbamoyl phosphate: step 3/3. This is Argininosuccinate lyase 1 from Pseudomonas fluorescens (strain Pf0-1).